The chain runs to 628 residues: Eukaryotic peptide chain release factor GTP-binding subunit ERF3B (628 aa).

A compositionally biased stretch (low complexity) spans 1–10; that stretch reads MDSGSSSSDS. 3 disordered regions span residues 1–49, 72–124, and 146–195; these read MDSG…SAFS, FLRG…LEGS, and LEES…VIVP. The region spanning 201 to 425 is the tr-type G domain; the sequence is KEHVNVVFIG…YLDNLPNFNR (225 aa). A G1 region spans residues 210–217; that stretch reads GHVDAGKS. A GTP-binding site is contributed by 213–218; the sequence is DAGKST. Positions 266-270 are G2; that stretch reads GKTVE. The segment at 287 to 290 is G3; the sequence is DAPG. GTP contacts are provided by residues 349–352 and 391–393; these read NKMD and SGL. The segment at 349–352 is G4; that stretch reads NKMD. The tract at residues 391–393 is G5; the sequence is SGL.

Belongs to the TRAFAC class translation factor GTPase superfamily. Classic translation factor GTPase family. ERF3 subfamily. Component of the eRF1-eRF3-GTP ternary complex, composed of ETF1/ERF1 and ERF3 (GSPT1/ERF3A or GSPT2/ERF3B) and GTP. Component of the transient SURF (SMG1-UPF1-eRF1-eRF3) complex. Interacts with UPF1 and PABPC1. As to expression, highly expressed in IUCC stage II colorectal cancer (CRC).

It localises to the cytoplasm. It catalyses the reaction GTP + H2O = GDP + phosphate + H(+). GTPase component of the eRF1-eRF3-GTP ternary complex, a ternary complex that mediates translation termination in response to the termination codons UAA, UAG and UGA. GSPT2/ERF3B mediates ETF1/ERF1 delivery to stop codons: The eRF1-eRF3-GTP complex binds to a stop codon in the ribosomal A-site. GTP hydrolysis by GSPT2/ERF3B induces a conformational change that leads to its dissociation, permitting ETF1/ERF1 to accommodate fully in the A-site. Component of the transient SURF complex which recruits UPF1 to stalled ribosomes in the context of nonsense-mediated decay (NMD) of mRNAs containing premature stop codons. The chain is Eukaryotic peptide chain release factor GTP-binding subunit ERF3B (GSPT2) from Homo sapiens (Human).